A 619-amino-acid polypeptide reads, in one-letter code: ATP-dependent RNA helicase abstrakt (619 aa).

Residues methionine 1–serine 11 are compositionally biased toward basic residues. 2 disordered regions span residues methionine 1 to valine 25 and glutamate 50 to alanine 69. A phosphoserine mark is found at serine 11, serine 13, serine 14, serine 56, serine 57, serine 58, and serine 66. Residues arginine 177–valine 205 carry the Q motif motif. The region spanning leucine 208–isoleucine 392 is the Helicase ATP-binding domain. An ATP-binding site is contributed by alanine 221–threonine 228. Residues aspartate 340–aspartate 343 carry the DEAD box motif. The region spanning asparagine 403 to alanine 563 is the Helicase C-terminal domain. The segment at histidine 577–lysine 594 adopts a CCHC-type zinc-finger fold.

This sequence belongs to the DEAD box helicase family. DDX41 subfamily.

It localises to the nucleus. The catalysed reaction is ATP + H2O = ADP + phosphate + H(+). Functionally, ATP-dependent RNA helicase. Is essential for the directed and fasciculated early outgrowth of the bolwig nerves, as well as for its navigation at later stages. Is required during post-transcriptional gene expression. Plays a role during morphogenetic process, apoptosis and the establishment of cell polarity. The protein is ATP-dependent RNA helicase abstrakt (abs) of Drosophila melanogaster (Fruit fly).